The following is a 101-amino-acid chain: YcgL domain-containing protein ABBFA_001807 (101 aa).

Residues 1–92 (MHCDIYRSSK…PPEGLINPNA (92 aa)) form the YcgL domain.

In Acinetobacter baumannii (strain AB307-0294), this protein is YcgL domain-containing protein ABBFA_001807.